We begin with the raw amino-acid sequence, 555 residues long: Arginine--tRNA ligase (555 aa).

Residues 117-127 (ANPNGPLHVGH) carry the 'HIGH' region motif.

Belongs to the class-I aminoacyl-tRNA synthetase family.

It localises to the cytoplasm. The enzyme catalyses tRNA(Arg) + L-arginine + ATP = L-arginyl-tRNA(Arg) + AMP + diphosphate. This chain is Arginine--tRNA ligase, found in Methanospirillum hungatei JF-1 (strain ATCC 27890 / DSM 864 / NBRC 100397 / JF-1).